The chain runs to 123 residues: Small ribosomal subunit protein uS13 (123 aa).

Residues A94–K123 are disordered. Positions Q101–K123 are enriched in basic residues.

It belongs to the universal ribosomal protein uS13 family. In terms of assembly, part of the 30S ribosomal subunit. Forms a loose heterodimer with protein S19. Forms two bridges to the 50S subunit in the 70S ribosome.

Located at the top of the head of the 30S subunit, it contacts several helices of the 16S rRNA. In the 70S ribosome it contacts the 23S rRNA (bridge B1a) and protein L5 of the 50S subunit (bridge B1b), connecting the 2 subunits; these bridges are implicated in subunit movement. Contacts the tRNAs in the A and P-sites. The protein is Small ribosomal subunit protein uS13 of Acetivibrio thermocellus (strain ATCC 27405 / DSM 1237 / JCM 9322 / NBRC 103400 / NCIMB 10682 / NRRL B-4536 / VPI 7372) (Clostridium thermocellum).